The primary structure comprises 597 residues: Gigaxonin (597 aa).

Residues 30-99 enclose the BTB domain; that stretch reads CDAHLVLDGE…IFSGQIRLNE (70 aa). One can recognise a BACK domain in the interval 134–236; sequence CIGIRDFALH…DSSYLREQML (103 aa). Kelch repeat units lie at residues 274-326, 327-374, 376-421, 422-468, 470-522, and 528-574; these read CIVT…SAEG, FLFV…EIDG, LYIL…AMKK, KIYA…GVAM, LYVF…VYGA, and SIYV…AALR.

As to quaternary structure, interacts with TBCB. Interacts with CUL3. Part of a complex that contains CUL3, RBX1 and GAN. Interacts (via BTB domain) with UBA1. Interacts (via Kelch domains) with MAP1B (via C-terminus) and MAP1S (via C-terminus). Post-translationally, ubiquitinated by E3 ubiquitin ligase complex formed by CUL3 and RBX1 and probably targeted for proteasome-independent degradation. In terms of tissue distribution, expressed in brain, heart and muscle (at protein level).

Its subcellular location is the cytoplasm. It is found in the cytoskeleton. Its pathway is protein modification; protein ubiquitination. Probable cytoskeletal component that directly or indirectly plays an important role in neurofilament architecture. May act as a substrate-specific adapter of an E3 ubiquitin-protein ligase complex which mediates the ubiquitination and subsequent proteasomal degradation of target proteins. Controls degradation of TBCB. Controls degradation of MAP1B and MAP1S, and is critical for neuronal maintenance and survival. The polypeptide is Gigaxonin (Mus musculus (Mouse)).